Here is a 509-residue protein sequence, read N- to C-terminus: Cytochrome P450 monooxygenase CYP512U6 (509 aa).

Residues 12–29 (VFACVAVVIAIYAVRWYT) form a helical membrane-spanning segment. Residue cysteine 446 coordinates heme.

This sequence belongs to the cytochrome P450 family. Heme is required as a cofactor.

The protein resides in the membrane. The enzyme catalyses ganoderate DM + reduced [NADPH--hemoprotein reductase] + O2 = hainanate A + oxidized [NADPH--hemoprotein reductase] + H2O + H(+). The catalysed reaction is ganoderate TR + reduced [NADPH--hemoprotein reductase] + O2 = ganoderate Jc + oxidized [NADPH--hemoprotein reductase] + H2O + H(+). The protein operates within secondary metabolite biosynthesis; terpenoid biosynthesis. In terms of biological role, cytochrome P450 monooxygenase that hydroxylates the ganoderic acids DM and TR at the C-23 position to produce hainanic acid A and ganoderic acid Jc, respectively. The protein is Cytochrome P450 monooxygenase CYP512U6 of Ganoderma lucidum (Ling zhi medicinal fungus).